Reading from the N-terminus, the 213-residue chain is MSKEELLQELAGAVITCKKDAVLAAVEKAKGELDPSEIIEKGLAAGMNEVGVLFERGKLFLPHVMMAADAMTAGVEALKDLMPEGSASSKMGVIVNGTVEGDVHDIGKSIVSTMLQSAGFEVHDIGRDVPIKNFVEKAKEVNADMIGLSALMTTTLPGQRDVIELLKEEGLRENVKVMIGGAPATQAWADKIGADCYAENASEAVAKAKELLA.

Positions 1-90 (MSKEELLQEL…LMPEGSASSK (90 aa)) constitute a B12-binding N-terminal domain. The B12-binding domain maps to 91 to 213 (MGVIVNGTVE…AVAKAKELLA (123 aa)). Histidine 104 contributes to the methylcob(III)alamin binding site.

It belongs to the methylamine corrinoid protein family.

It participates in one-carbon metabolism; methanogenesis from dimethylamine. In terms of biological role, acts as a methyl group carrier between MtbB and MtbA. This chain is Dimethylamine corrinoid protein 1 (mtbC1), found in Methanosarcina acetivorans (strain ATCC 35395 / DSM 2834 / JCM 12185 / C2A).